Reading from the N-terminus, the 502-residue chain is Type II methyltransferase M.HincII (502 aa).

It belongs to the N(4)/N(6)-methyltransferase family.

It catalyses the reaction a 2'-deoxyadenosine in DNA + S-adenosyl-L-methionine = an N(6)-methyl-2'-deoxyadenosine in DNA + S-adenosyl-L-homocysteine + H(+). A gamma subtype methylase that recognizes the double-stranded sequence 5'-GTYRAC-3', methylates A-5 on both strands, and protects the DNA from cleavage by the HincII endonuclease. In Haemophilus influenzae, this protein is Type II methyltransferase M.HincII.